The primary structure comprises 620 residues: DNA mismatch repair protein MutL (620 aa).

Residues 353–375 (SRANGANDFTGRPFSGTERPRGG) are disordered.

It belongs to the DNA mismatch repair MutL/HexB family.

In terms of biological role, this protein is involved in the repair of mismatches in DNA. It is required for dam-dependent methyl-directed DNA mismatch repair. May act as a 'molecular matchmaker', a protein that promotes the formation of a stable complex between two or more DNA-binding proteins in an ATP-dependent manner without itself being part of a final effector complex. The sequence is that of DNA mismatch repair protein MutL from Chelativorans sp. (strain BNC1).